Here is an 82-residue protein sequence, read N- to C-terminus: Protein WFDC11 (82 aa).

The N-terminal stretch at 1-21 is a signal peptide; it reads MKPSWFPCLVFLCMLLLSALG.

Its subcellular location is the secreted. In Mus musculus (Mouse), this protein is Protein WFDC11 (Wfdc11).